The chain runs to 340 residues: Meiotic recombination protein DMC1/LIM15 homolog (340 aa).

126–133 (GEFRTGKT) is a binding site for ATP. R230 provides a ligand contact to dsDNA. 5 residues coordinate ssDNA: R230, F233, R236, R242, and R311. DsDNA is bound by residues R236 and R242.

Belongs to the RecA family. DMC1 subfamily. As to quaternary structure, double stacked ring-shaped homooctamer. Interacts with BRCA2. Interacts with the MND1-PSMC3IP heterodimer. Interacts with RAD51AP1; the interaction is direct and stimulates DMC1-mediated homologous recombination. As to expression, testis.

The protein resides in the nucleus. It is found in the chromosome. Its function is as follows. Participates in meiotic recombination, specifically in homologous strand assimilation, which is required for the resolution of meiotic double-strand breaks. In Mus musculus (Mouse), this protein is Meiotic recombination protein DMC1/LIM15 homolog.